A 155-amino-acid polypeptide reads, in one-letter code: Small ribosomal subunit protein uS7 (155 aa).

It belongs to the universal ribosomal protein uS7 family. In terms of assembly, part of the 30S ribosomal subunit. Contacts proteins S9 and S11.

In terms of biological role, one of the primary rRNA binding proteins, it binds directly to 16S rRNA where it nucleates assembly of the head domain of the 30S subunit. Is located at the subunit interface close to the decoding center, probably blocks exit of the E-site tRNA. This chain is Small ribosomal subunit protein uS7, found in Mycoplasma capricolum subsp. capricolum (strain California kid / ATCC 27343 / NCTC 10154).